An 84-amino-acid chain; its full sequence is U21-theraphotoxin-Cg1c (84 aa).

Residues 1–21 (MKVSVLITLAVLGVMFLLTSA) form the signal peptide. A propeptide spanning residues 22 to 47 (EERGSDQMDSPAWLKSMERIFQSEER) is cleaved from the precursor. 3 disulfide bridges follow: Cys-49/Cys-63, Cys-56/Cys-68, and Cys-62/Cys-76.

This sequence belongs to the neurotoxin 10 (Hwtx-1) family. 05 (F4a) subfamily. In terms of tissue distribution, expressed by the venom gland.

The protein localises to the secreted. Probable ion channel inhibitor. This Chilobrachys guangxiensis (Chinese earth tiger tarantula) protein is U21-theraphotoxin-Cg1c.